The sequence spans 334 residues: Fructose-1,6-bisphosphatase class 1 (334 aa).

4 residues coordinate Mg(2+): E92, D114, L116, and D117. Substrate is bound by residues 117-120 (DGSS) and N209. E281 contributes to the Mg(2+) binding site.

This sequence belongs to the FBPase class 1 family. In terms of assembly, homotetramer. The cofactor is Mg(2+).

The protein localises to the cytoplasm. It carries out the reaction beta-D-fructose 1,6-bisphosphate + H2O = beta-D-fructose 6-phosphate + phosphate. Its pathway is carbohydrate biosynthesis; gluconeogenesis. In Nitrosomonas europaea (strain ATCC 19718 / CIP 103999 / KCTC 2705 / NBRC 14298), this protein is Fructose-1,6-bisphosphatase class 1.